The following is a 179-amino-acid chain: ADP-ribosylation factor-like protein 5B (179 aa).

Glycine 2 carries N-myristoyl glycine lipidation. GTP-binding positions include 23 to 30 (GLDNAGKT), 66 to 70 (DIGGQ), 125 to 128 (NKQD), and alanine 159.

The protein belongs to the small GTPase superfamily. Arf family.

Its function is as follows. Binds and exchanges GTP and GDP. The protein is ADP-ribosylation factor-like protein 5B (Arl5b) of Mus musculus (Mouse).